The chain runs to 180 residues: MMTYNKKYIDSVEYDLIETRKRMWMMERKKNEELLKKYQQAMSDLEDYKNLYMRQRSEMENYQRYIEKTINNIKANANADLIKTMLPVLDSLDAGILHDEKLKPIRSQLIKILSNYGLKEIESRGKKFDPYLNEVVGIVKGDDDIVVEEVQKGYILNNEVLRTSKVIVSKGGNNEQDNRN.

This sequence belongs to the GrpE family. As to quaternary structure, homodimer.

It localises to the cytoplasm. In terms of biological role, participates actively in the response to hyperosmotic and heat shock by preventing the aggregation of stress-denatured proteins, in association with DnaK and GrpE. It is the nucleotide exchange factor for DnaK and may function as a thermosensor. Unfolded proteins bind initially to DnaJ; upon interaction with the DnaJ-bound protein, DnaK hydrolyzes its bound ATP, resulting in the formation of a stable complex. GrpE releases ADP from DnaK; ATP binding to DnaK triggers the release of the substrate protein, thus completing the reaction cycle. Several rounds of ATP-dependent interactions between DnaJ, DnaK and GrpE are required for fully efficient folding. This Picrophilus torridus (strain ATCC 700027 / DSM 9790 / JCM 10055 / NBRC 100828 / KAW 2/3) protein is Protein GrpE.